Consider the following 127-residue polypeptide: MGKAAAPRALPENEAKAVARMLRVSPQKLNLVAQLIRGKKVANALADLQFSRKRIAVEVRKCLESAIANAENNHDLDVDDLVVKEAYVGKALVLKRFHARARGRGARILKPFANLTIVVREVRAEAA.

It belongs to the universal ribosomal protein uL22 family. In terms of assembly, part of the 50S ribosomal subunit.

In terms of biological role, this protein binds specifically to 23S rRNA; its binding is stimulated by other ribosomal proteins, e.g. L4, L17, and L20. It is important during the early stages of 50S assembly. It makes multiple contacts with different domains of the 23S rRNA in the assembled 50S subunit and ribosome. Functionally, the globular domain of the protein is located near the polypeptide exit tunnel on the outside of the subunit, while an extended beta-hairpin is found that lines the wall of the exit tunnel in the center of the 70S ribosome. This is Large ribosomal subunit protein uL22 from Methylobacterium sp. (strain 4-46).